Consider the following 556-residue polypeptide: Arginine--tRNA ligase (556 aa).

The 'HIGH' region motif lies at 132-142 (ANPTGDLHLGH).

Belongs to the class-I aminoacyl-tRNA synthetase family. Monomer.

It is found in the cytoplasm. It catalyses the reaction tRNA(Arg) + L-arginine + ATP = L-arginyl-tRNA(Arg) + AMP + diphosphate. In Bacillus cereus (strain ATCC 14579 / DSM 31 / CCUG 7414 / JCM 2152 / NBRC 15305 / NCIMB 9373 / NCTC 2599 / NRRL B-3711), this protein is Arginine--tRNA ligase.